Here is a 235-residue protein sequence, read N- to C-terminus: Regulator of G-protein signaling 18 (235 aa).

Ser-49 is subject to Phosphoserine. The region spanning 86 to 202 (SFDKLLSHRD…LKSDIYLDLM (117 aa)) is the RGS domain. Phosphoserine occurs at positions 216 and 218.

Expressed in peripheral leukocytes, bone marrow, platelet, spleen and fetal liver.

Its subcellular location is the cytoplasm. In terms of biological role, inhibits signal transduction by increasing the GTPase activity of G protein alpha subunits thereby driving them into their inactive GDP-bound form. Binds to G(i) alpha-1, G(i) alpha-2, G(i) alpha-3 and G(q) alpha. The polypeptide is Regulator of G-protein signaling 18 (RGS18) (Homo sapiens (Human)).